The chain runs to 674 residues: UvrABC system protein C (674 aa).

Positions 64–142 (NGPGVYRMLN…IKRLRPRFNV (79 aa)) constitute a GIY-YIG domain. One can recognise a UVR domain in the interval 252–287 (QAVKATIASAMAEASENLDFERAALYRDRLAALSHV).

The protein belongs to the UvrC family. Interacts with UvrB in an incision complex.

Its subcellular location is the cytoplasm. In terms of biological role, the UvrABC repair system catalyzes the recognition and processing of DNA lesions. UvrC both incises the 5' and 3' sides of the lesion. The N-terminal half is responsible for the 3' incision and the C-terminal half is responsible for the 5' incision. The protein is UvrABC system protein C of Rhizobium meliloti (strain 1021) (Ensifer meliloti).